We begin with the raw amino-acid sequence, 193 residues long: Thymidine kinase (193 aa).

ATP-binding positions include 9–16 and 87–90; these read SAMNAGKS and DEAQ. Glu-88 acts as the Proton acceptor in catalysis. Positions 145, 147, 182, and 185 each coordinate Zn(2+).

This sequence belongs to the thymidine kinase family. In terms of assembly, homotetramer.

It is found in the cytoplasm. It carries out the reaction thymidine + ATP = dTMP + ADP + H(+). The polypeptide is Thymidine kinase (Idiomarina loihiensis (strain ATCC BAA-735 / DSM 15497 / L2-TR)).